The chain runs to 535 residues: Berberine bridge enzyme-like 27 (535 aa).

Residues 1–22 form the signal peptide; that stretch reads MEILRFLLSLFIYFLLLNLSLS. Asn18 and Asn66 each carry an N-linked (GlcNAc...) asparagine glycan. Cysteines 40 and 100 form a disulfide. An FAD-binding PCMH-type domain is found at 78 to 253; it reads ETPKPVSIIT…LSWKIRLLDV (176 aa). His115 is subject to Pros-8alpha-FAD histidine. Residues Asn146, Asn215, and Asn439 are each glycosylated (N-linked (GlcNAc...) asparagine).

The protein belongs to the oxygen-dependent FAD-linked oxidoreductase family. FAD is required as a cofactor. Accumulates in cell walls of etiolated hypocotyls.

The protein localises to the secreted. Its subcellular location is the cell wall. The protein is Berberine bridge enzyme-like 27 of Arabidopsis thaliana (Mouse-ear cress).